A 1051-amino-acid chain; its full sequence is MFVFIYCLQADDKSLLARFYHADRSLTAVASELDSFDGRAEPDRCTRLVSRLRQNQDKVLAITNLIMEELLGDERDPRAFRAKFPEEVLQDNLAGQLWFGAECLAAGSSILNRESESKEMRPLAQAVTKSLGNVRVLLRDQCLRNNVPNSKTLHLDFNDSTTEQLYESLKIFDHLFAEFELSYVSAMVPVKSRHEYEMQQWIGVLFSETLQRALKIGLLEQEMVDAFDPGLMFSIPRLAIVAGLVVFTKGPLNMDMPGDELSEMFRPFRTILIKIRDLLRNLSKQELHQLEKLLCTNEEINTNVPLGSSSIEAPSPEHNNTSSSTSNNNNNNNNNSSSSSSSSSGSGSNTAKTSTSSTHKAVERLVDHRNNNSSTVAGATQPSTARSPSMLSLSAGSTPTASPAPSPTPSHSIASTSSAATTSTNPPANWSDYDEDDEDLEEEVGMLDSDEDDLNDDSDDDIEVDEYIEAQLKAIVAAADCASGYLIPNTNLGNLFQAQQLPLTDNFVASEDDEFGSNAATERQQQQQHMDELQPGDQQQQQQQLQDEPSTSAAMLAAQRTLQRLHLPSSSSENEQAPSSNQQTTIKTPNGNQSMPNSSSSSSNHNNNRHRHSHSHSHSSHHHHHHHRHHHHTHPHHQQQQEQRLQAADHHHHHHHHHQSHPHRINRSARKRCSQEHWESTANAEQPAPEQTPGSADTSNASSFSDEVSLAMRSTTARLKFKSTENLLHRLFVCIAGVADQLQTNFASDLRQILRSVFLINMSSSQDEDIDIPEKTKESELFEFRASENDVIQESAGSNQSIYSAEEVNPELDNVFNNTNAAVRHSAGAAMQRNNTIDLASGNNNGNSNAAARNHVARSRSLGDQEAAGSGTRQDEQRQQQQQQQQQLQQQLQMQRQRNNSVGSNSPSSASSSSSSSEHNSPISTRSGSRRRLHSNSSIGTTSTITPSTAAATATTMSPPAWIPDGKAPRCMSCQTPFTAFRRRHHCRNCGGVFCGVCSNASAPLPKYGLTKAVRVCRECYVREVRSSRQAPAQPSQAHGQASRPQAASAS.

Disordered regions lie at residues 305-440 (PLGS…DEDL), 516-552 (GSNA…PSTS), 566-703 (HLPS…NASS), and 837-968 (IDLA…DGKA). The segment covering 319 to 358 (NNTSSSTSNNNNNNNNNSSSSSSSSSGSGSNTAKTSTSST) has biased composition (low complexity). The span at 360 to 370 (KAVERLVDHRN) shows a compositional bias: basic and acidic residues. Polar residues predominate over residues 371–391 (NNSSTVAGATQPSTARSPSML). Low complexity-rich tracts occupy residues 392–401 (SLSAGSTPTA) and 409–428 (PSHS…NPPA). Over residues 518-528 (NAATERQQQQQ) the composition is skewed to polar residues. Low complexity-rich tracts occupy residues 533–549 (LQPG…QDEP) and 568–582 (PSSS…SSNQ). 2 positions are modified to phosphoserine: serine 569 and serine 570. Residues 583–596 (QTTIKTPNGNQSMP) show a composition bias toward polar residues. Positions 597–606 (NSSSSSSNHN) are enriched in low complexity. Composition is skewed to basic residues over residues 607–637 (NNRH…HPHH) and 650–672 (HHHH…ARKR). The segment covering 692-703 (TPGSADTSNASS) has biased composition (polar residues). Over residues 840–852 (ASGNNNGNSNAAA) the composition is skewed to low complexity. Serine 861 bears the Phosphoserine mark. 2 stretches are compositionally biased toward low complexity: residues 879–924 (QQQQ…SPIS) and 937–960 (SSIG…MSPP). Residues 965-1025 (DGKAPRCMSC…VCRECYVREV (61 aa)) form an FYVE-type zinc finger. Zn(2+) is bound by residues cysteine 971, cysteine 974, cysteine 987, cysteine 990, cysteine 995, cysteine 998, cysteine 1017, and cysteine 1020. Positions 1028–1051 (SRQAPAQPSQAHGQASRPQAASAS) are disordered.

The protein belongs to the lst-2 family.

Functionally, negative regulator of epidermal growth factor receptor (EGFR) signaling. The polypeptide is Lateral signaling target protein 2 homolog (Drosophila mojavensis (Fruit fly)).